The following is a 259-amino-acid chain: Transcription factor bHLH125 (259 aa).

In terms of domain architecture, bHLH spans 73–125 (SKKMKHRDIERQRRQEVSSLFKRLRTLLPFQYIQGKRSTSDHIVQAVNYIKDL).

In terms of assembly, homodimer.

It localises to the nucleus. The chain is Transcription factor bHLH125 (BHLH125) from Arabidopsis thaliana (Mouse-ear cress).